Reading from the N-terminus, the 152-residue chain is Ribosome maturation factor RimP (152 aa).

Belongs to the RimP family.

It localises to the cytoplasm. Required for maturation of 30S ribosomal subunits. The sequence is that of Ribosome maturation factor RimP from Pseudomonas aeruginosa (strain LESB58).